The sequence spans 130 residues: MVMLDLLSNALIQIKNAEAMGKRQVAIWPVNKLIYYTLRVLQRHGYVGEVEYIDDGRGGKYVVQLLGKINDIGPIKPRYPVKYREIVQWEQKFLPARQIGILVISTNQGVMSHVEAKEKKIGGVLLAYVY.

The protein belongs to the universal ribosomal protein uS8 family. In terms of assembly, part of the 30S ribosomal subunit.

Functionally, one of the primary rRNA binding proteins, it binds directly to 16S rRNA central domain where it helps coordinate assembly of the platform of the 30S subunit. This chain is Small ribosomal subunit protein uS8, found in Pyrobaculum neutrophilum (strain DSM 2338 / JCM 9278 / NBRC 100436 / V24Sta) (Thermoproteus neutrophilus).